The chain runs to 1775 residues: Internalin I (1775 aa).

An N-terminal signal peptide occupies residues 1–28 (MKKKFSIVIISVLLLGYLAPFDTLLVGA). Residues 36 to 50 (DTTVKTAETETATEA) show a composition bias toward low complexity. The disordered stretch occupies residues 36-97 (DTTVKTAETE…SNIKTEINTD (62 aa)). Over residues 58–85 (DNEKAEEPKEAEASKETTEKEEKAKTKE) the composition is skewed to basic and acidic residues. LRR repeat units follow at residues 152–176 (AISQ…EGLQ), 180–201 (NLTS…KDLV), 202–224 (NLVS…EGLV), 225–247 (NLQE…AALP), 248–269 (VLKE…NPAG), 274–295 (ELET…AKLP), 296–318 (KLKN…KGAT), 319–341 (KLQL…SGLS), 342–364 (ELEM…KDLP), 365–386 (NLVN…NNLP), 387–409 (KLQT…TDMP), 410–431 (QLKT…DNLP), 432–453 (KLEK…NDLP), 454–475 (RLSY…KKLP), 476–497 (LLEW…TNFP), 498–519 (SLNY…TELP), 520–541 (SLKE…HDMP), 542–563 (NLRK…DNLP), 564–585 (KLQN…HDLP), 586–607 (SLET…DNLP), 608–629 (ELTY…GDLP), 630–650 (KLEI…GTMD), 654–675 (KLRN…GNLS), 682–704 (NLTE…STLS), 705–726 (RLIY…SNLT), 727–748 (TLQE…SDLD), and 749–770 (NLNK…ANMV). In terms of domain architecture, LRRCT spans 782 to 869 (TYTLPTVLSY…SAVKVTANAE (88 aa)). 3 MucBP domains span residues 1507–1566 (DAAA…EQTV), 1572–1631 (AIEP…PQTI), and 1641–1702 (SKKS…SQTV). The interval 1713-1737 (SKDEPKVKGKTNQPPSADTKLKVDN) is disordered. The short motif at 1740–1744 (LPATG) is the LPXTG sorting signal element. Thr1743 is modified (pentaglycyl murein peptidoglycan amidated threonine). Positions 1744–1775 (GDTENMALAVLIGFNMLLVASIFLFRKPKTNQ) are cleaved as a propeptide — removed by sortase.

It belongs to the internalin family.

It localises to the secreted. It is found in the cell wall. A role in virulence could not be demonstrated. This Listeria monocytogenes serotype 4b (strain F2365) protein is Internalin I (inlI).